A 258-amino-acid chain; its full sequence is Ribosomal RNA small subunit methyltransferase J (258 aa).

S-adenosyl-L-methionine contacts are provided by residues 107–108, 123–124, and Asp177; these read RD and ER.

The protein belongs to the methyltransferase superfamily. RsmJ family.

It localises to the cytoplasm. It carries out the reaction guanosine(1516) in 16S rRNA + S-adenosyl-L-methionine = N(2)-methylguanosine(1516) in 16S rRNA + S-adenosyl-L-homocysteine + H(+). In terms of biological role, specifically methylates the guanosine in position 1516 of 16S rRNA. The chain is Ribosomal RNA small subunit methyltransferase J from Stutzerimonas stutzeri (strain A1501) (Pseudomonas stutzeri).